The primary structure comprises 86 residues: Cytochrome c oxidase subunit 6B1 (86 aa).

Alanine 2 carries the N-acetylalanine modification. The CHCH domain maps to 27 to 73; sequence TRNCWQNYLDFHRCEKAMTAKGGDVSVCEWYRRVYKSLCPISWVSTW. A Cx9C motif motif is present at residues 30–40; sequence CWQNYLDFHRC. 2 disulfide bridges follow: cysteine 30-cysteine 65 and cysteine 40-cysteine 54. Residues 54 to 65 carry the Cx10C motif motif; that stretch reads CEWYRRVYKSLC. At lysine 62 the chain carries N6-acetyllysine.

The protein belongs to the cytochrome c oxidase subunit 6B family. Component of the cytochrome c oxidase (complex IV, CIV), a multisubunit enzyme composed of 14 subunits. The complex is composed of a catalytic core of 3 subunits MT-CO1, MT-CO2 and MT-CO3, encoded in the mitochondrial DNA, and 11 supernumerary subunits COX4I, COX5A, COX5B, COX6A, COX6B, COX6C, COX7A, COX7B, COX7C, COX8 and NDUFA4, which are encoded in the nuclear genome. The complex exists as a monomer or a dimer and forms supercomplexes (SCs) in the inner mitochondrial membrane with NADH-ubiquinone oxidoreductase (complex I, CI) and ubiquinol-cytochrome c oxidoreductase (cytochrome b-c1 complex, complex III, CIII), resulting in different assemblies (supercomplex SCI(1)III(2)IV(1) and megacomplex MCI(2)III(2)IV(2)).

Its subcellular location is the mitochondrion inner membrane. The protein operates within energy metabolism; oxidative phosphorylation. Its function is as follows. Component of the cytochrome c oxidase, the last enzyme in the mitochondrial electron transport chain which drives oxidative phosphorylation. The respiratory chain contains 3 multisubunit complexes succinate dehydrogenase (complex II, CII), ubiquinol-cytochrome c oxidoreductase (cytochrome b-c1 complex, complex III, CIII) and cytochrome c oxidase (complex IV, CIV), that cooperate to transfer electrons derived from NADH and succinate to molecular oxygen, creating an electrochemical gradient over the inner membrane that drives transmembrane transport and the ATP synthase. Cytochrome c oxidase is the component of the respiratory chain that catalyzes the reduction of oxygen to water. Electrons originating from reduced cytochrome c in the intermembrane space (IMS) are transferred via the dinuclear copper A center (CU(A)) of subunit 2 and heme A of subunit 1 to the active site in subunit 1, a binuclear center (BNC) formed by heme A3 and copper B (CU(B)). The BNC reduces molecular oxygen to 2 water molecules using 4 electrons from cytochrome c in the IMS and 4 protons from the mitochondrial matrix. This Carlito syrichta (Philippine tarsier) protein is Cytochrome c oxidase subunit 6B1 (COX6B1).